Consider the following 577-residue polypeptide: Zinc finger protein 384 (577 aa).

The segment at 171-225 is disordered; the sequence is TLTEEGGGGGGGGGSVAPKPPRGRKKKRMLESGLPEMNDPYVLSPEDDDDHQKDG. Positions 175–185 are enriched in gly residues; that stretch reads EGGGGGGGGGS. The residue at position 214 (Ser214) is a Phosphoserine. C2H2-type zinc fingers lie at residues 228–250, 256–278, 284–306, 317–339, 345–367, 373–397, 403–425, and 433–455; these read YRCR…SKSH, HKCP…IRIH, YSCN…TRIH, HKCP…LRIH, YNCS…TRIH, YKCA…RRQH, FKCH…LSTH, and YTCT…MRKH. A compositionally biased stretch (low complexity) spans 501-515; sequence QQQQQQQQQQQQQQQ. The interval 501-550 is disordered; that stretch reads QQQQQQQQQQQQQQQQPPPHFQSPGAAPQGGGGGDSNPNPPPQCSFDLTP.

It belongs to the krueppel C2H2-type zinc-finger protein family. Interacts with BCAR1.

It is found in the nucleus. Transcription factor that binds the consensus DNA sequence [GC]AAAAA. Seems to bind and regulate the promoters of MMP1, MMP3, MMP7 and COL1A1. The sequence is that of Zinc finger protein 384 (ZNF384) from Homo sapiens (Human).